We begin with the raw amino-acid sequence, 1303 residues long: MSTTKFNSISPIELLEIISSYDIQDEIKLSHIQNLKTHIKKDTIDLRNVPIYLQIITKGLEITRLNISSVSFNSLSYLIKRISVQDKSGNILKEECFLILPILINKLGNASSPAGTNSAKKSLEDYWLSSPIEVEDALTEIAFENPNTKITIETIDWMTQILKNISAKFNVPKFLPKILHSIEINPHNEEIIVSTKELLSIYLEKNPSAIEGFKKQIESHSLAQATKDKLLGSVISKLRGSDPEPHVQRANTPRSNTPVSQIQSSLVDVGHDVELLELLNKVNYEIDSSIKALDIRDANSLFNTFEIFMPCFDGKETESNWKVREKNILQMRSILRGNSATQFRSELVQCIHTIANGMCKGASSLRTTLSSNSCQLIKECAVILKKSLEPVAESLFPTLIKLCSSTKNIASTNANMSVAALYANLPYTSKMIQRITLASEDRNYQPRSYSLIWLHILLLKIGIDRSYIGHHDSSFIEAANKVFMKLLKDANPNVRQTAKECYWCFTRVFPEDAERLLKRLEPNIVRALERSQRESGGSGIAPIRTLSSRPSRPSLKEAILEKNKELRQRRPPSRNSGEQSTKIKSVPLPRPTKSSSRLEKSLLRPDVGHKSQPAVRASSWTYPSTQSGPKATFKQRERSKTEVHKKSPLEISRPSSRLDTGAVSSFNNKNDPMINFLSSSDSDLIKEGINLLKYAIIGKENLPSEINSLLKSISEKHVQFMKPLFTSNDYTFKKAASLLLPDDFLRVCALVFDEFDEAVISLIIQCIDVSTFYESACNLLTLVADTPNIPGSHALVMQISNQKLTITKSILQALSIALSKHAVTDVQFGEIFQELVKLIIVLKATDYYSLLCQLFRQLYTIDSNKFSLLVEDVEGKLKEEVEFIVGIESTMTLERPSSKLDYDLTVVKPTSNLGTFVLSQKPSADDFTMLLPKRSEFLGSGEVYNSKMVAKIEASDSSPQKQSQMDQISSKRSNSEHQSEVLVDDFANVSIADGGGSKLNQSKNDDDNLKQFMERIDPLKPISNKIRKISIYEDAKQNSEKPKLERNWGGFQYAKFSRAIRVNAVAENMSLTSQEFESCCSKLVETPSQSALLKMTWFVDSLSVSSYDYQEFFLNKGKHKLEKSLWEFFSKIDKSDHSLVMNGLFLLKQLLKFNDTPNVDKLFALLVDTCSQEELDSELYFIWNEMLLSLNHDELMKSFEKNALNYLEGEENNLTISSLCLNYLAKVLVDDNCLDVAKIYRLDTIFGKLFHEREVMFRKSATICYSNLLKNTNVSPEVKDTLDKVKSRYPASTQRLIEFYMKR.

3 disordered regions span residues 239 to 259 (RGSD…NTPV), 531 to 664 (SQRE…GAVS), and 953 to 977 (EASD…NSEH). Residues 249–259 (RANTPRSNTPV) are compositionally biased toward polar residues. Residues 554–568 (SLKEAILEKNKELRQ) show a composition bias toward basic and acidic residues. Residues 573 to 583 (SRNSGEQSTKI) are compositionally biased toward polar residues. Positions 596 to 609 (SRLEKSLLRPDVGH) are enriched in basic and acidic residues. A compositionally biased stretch (polar residues) spans 618-629 (SSWTYPSTQSGP). Positions 634 to 648 (KQRERSKTEVHKKSP) are enriched in basic and acidic residues. Polar residues-rich tracts occupy residues 653-664 (RPSSRLDTGAVS) and 955-972 (SDSS…SSKR).

This sequence belongs to the CLASP family. In terms of assembly, interacts with microtubules.

The protein resides in the cytoplasm. The protein localises to the cytoskeleton. Its subcellular location is the nucleus. It is found in the spindle. Functionally, microtubule binding protein that promotes the stabilization of dynamic microtubules. Required for mitotic spindle formation. The protein is Protein STU1 (STU1) of Candida albicans (strain SC5314 / ATCC MYA-2876) (Yeast).